Consider the following 631-residue polypeptide: FAST kinase domain-containing protein 4 (631 aa).

A mitochondrion-targeting transit peptide spans 1 to 107 (MAAHLVKRCT…NQAAMVLIRL (107 aa)). S553 is modified (phosphoserine). An RAP domain is found at 561 to 619 (LAFLRWEFPNFNSRSKDLLGRFVLARRHIVAAGFLIVDVPFYEWLELKSEWQKGAYLKD).

Belongs to the FAST kinase family. Ubiquitously expressed. Expression detected in spleen, thymus, testis, ovary, colon, heart, smooth muscle, kidney, brain, lung, liver and white adipose tissue with highest expression in smooth muscle.

Its subcellular location is the mitochondrion matrix. Plays a role in processing of mitochondrial RNA precursors and in stabilization of a subset of mature mitochondrial RNA species, such as MT-CO1, MT-CO2, MT-CYB, MT-CO3, MT-ND3, MT-ND5 and MT-ATP8/6. May play a role in cell cycle progression. This is FAST kinase domain-containing protein 4 from Homo sapiens (Human).